We begin with the raw amino-acid sequence, 127 residues long: Cyclin-dependent kinase 2-associated protein 2 (127 aa).

The interval 1 to 49 is disordered; the sequence is MSYKPIAPAPSSTPGSSTPGPGTPVPTAGSVPSPSGSVPGAAGPFRPLF. Low complexity predominate over residues 9 to 44; sequence APSSTPGSSTPGPGTPVPTAGSVPSPSGSVPGAAGP. The interaction with CDK2 stretch occupies residues 65 to 107; it reads PPGAQGSQSTYTDLLSVIEEMGKEIRPTYAGSKSAMERLKRGI.

It belongs to the CDK2AP family. Component of the nucleosome remodeling and deacetylase (NuRD) repressor complex, composed of core proteins MTA1, MTA2, MTA3, RBBP4, RBBP7, HDAC1, HDAC2, MBD2, MBD3, and peripherally associated proteins CDK2AP1, CDK2AP2, GATAD2A, GATAD2B, CHD3, CHD4 and CHD5. The exact stoichiometry of the NuRD complex is unknown, and some subunits such as MBD2 and MBD3, GATAD2A and GATAD2B, and CHD3, CHD4 and CHD5 define mutually exclusive NuRD complexes. Interacts with CDK2AP1. Interacts with CDK2. Interacts with MAPK1. In terms of processing, phosphorylated by MAPK1 and CDK2.

Its subcellular location is the cytoplasm. It is found in the nucleus. Functionally, acts as a component of the histone deacetylase NuRD complex which participates in the remodeling of chromatin. Inhibits cell cycle G1/S phase transition by repressing CDK2 expression and activation; represses CDK2 activation by inhibiting its interaction with cyclin E and A. Plays a role in regulating the self-renewal of embryonic stem cells (ESCs) and in maintaining cell survival during terminal differentiation of ESCs. Regulates microtubule organization of metaphase II oocytes. In Bos taurus (Bovine), this protein is Cyclin-dependent kinase 2-associated protein 2 (CDK2AP2).